Consider the following 1156-residue polypeptide: Condensin-2 complex subunit G2 (1156 aa).

Residues methionine 460–cysteine 498 form an HEAT repeat. Residues proline 587–lysine 611 form a disordered region. Residues glutamate 589–glycine 601 show a composition bias toward acidic residues.

As to quaternary structure, component of the condensin-2 complex, which contains the smc2 and smc4 heterodimer, and three non SMC subunits that probably regulate the complex: ncaph2, ncapd3 and ncapg2.

It localises to the nucleus. In terms of biological role, regulatory subunit of the condensin-2 complex, a complex which establishes mitotic chromosome architecture and is involved in physical rigidity of the chromatid axis. This Xenopus laevis (African clawed frog) protein is Condensin-2 complex subunit G2 (ncapg2).